The chain runs to 528 residues: J domain-containing protein APJ1 (528 aa).

The 70-residue stretch at 4–73 (NTSLYDSLNV…RALYDQYGTT (70 aa)) folds into the J domain. Residues 193–274 (GKTAKLGLNR…CQGLGFIKER (82 aa)) form a CR-type zinc finger. 4 CXXCXGXG motif repeats span residues 206–213 (CSVCDGHG), 218–225 (CTCKTCKG), 246–253 (CADCGGAG), and 262–269 (CQQCQGLG). Residues 485-499 (NERDSRKRNNRRFDE) are compositionally biased toward basic and acidic residues. Residues 485–528 (NERDSRKRNNRRFDESNINNNNETKRNKYSSPVSGFYDHDINGY) form a disordered region.

It localises to the cytoplasm. The protein resides in the nucleus. Its function is as follows. Putative chaperone involved in protein folding. Interferes with propagation of [PSI+] prion when overproduced. In Saccharomyces cerevisiae (strain ATCC 204508 / S288c) (Baker's yeast), this protein is J domain-containing protein APJ1 (APJ1).